The chain runs to 352 residues: C-C chemokine receptor type 5 (352 aa).

Residues 1–30 are Extracellular-facing; the sequence is MDYQVSSPTYDIDYYTSEPCQKINVKQIAG. Position 3 is a sulfotyrosine (Y3). 2 O-linked (GalNAc...) serine glycosylation sites follow: S6 and S7. A sulfotyrosine mark is found at Y10, Y14, and Y15. Cystine bridges form between C20–C269 and C101–C178. The chain crosses the membrane as a helical span at residues 31-58; the sequence is RLLPPLYSLVFIFGFVGNILVVLILINC. Over 59 to 68 the chain is Cytoplasmic; the sequence is KRLKSMTDIY. A helical transmembrane segment spans residues 69–89; it reads LLNLAISDLLFLLTVPFWAHY. Over 90-102 the chain is Extracellular; the sequence is AAAQWDFGNTMCQ. The helical transmembrane segment at 103-124 threads the bilayer; the sequence is LLTGLYFIGFFSGIFFIILLTI. Residues 125–141 are Cytoplasmic-facing; it reads DRYLAIVHAVFALKART. A helical membrane pass occupies residues 142-166; the sequence is VTFGVVTSVITWVVAVFASLPGIIF. Topologically, residues 167 to 198 are extracellular; it reads TRSQREGLHYTCSSHFPYSQYQFWKNFQTLKI. A helical transmembrane segment spans residues 199 to 218; the sequence is VILGLVLPLLVMVICYSGIL. The Cytoplasmic portion of the chain corresponds to 219–235; the sequence is KTLLRCRNEKKRHRAVR. Residues 236–260 form a helical membrane-spanning segment; the sequence is LIFTIMIVYFLFWAPYNIVLLLNTF. Over 261-277 the chain is Extracellular; sequence QEFFGLNNCSSSNRLDQ. A helical membrane pass occupies residues 278–301; the sequence is AMQVTETLGMTHCCINPIIYAFVG. Residues 302–352 lie on the Cytoplasmic side of the membrane; it reads EKFRNYLLVFFQKHIAKRFCKCCSIFQQEAPERASSVYTRSTGEQEISVGL. 3 S-palmitoyl cysteine lipidation sites follow: C321, C323, and C324. Residues S336, S337, S342, and S349 each carry the phosphoserine; by BARK1 modification.

The protein belongs to the G-protein coupled receptor 1 family. In terms of assembly, interacts with PRAF2. Efficient ligand binding to CCL3/MIP-1alpha and CCL4/MIP-1beta requires sulfation, O-glycosylation and sialic acid modifications. Glycosylation on Ser-6 is required for efficient binding of CCL4. Interacts with GRK2. Interacts with ARRB1 and ARRB2. Interacts with CNIH4. Interacts with S100A4; this interaction stimulates T-lymphocyte chemotaxis. Sulfated on at least 2 of the N-terminal tyrosines. Sulfation is required for efficient binding of the chemokines, CCL3 and CCL4. In terms of processing, palmitoylation in the C-terminal is important for cell surface expression. Post-translationally, phosphorylation on serine residues in the C-terminal is stimulated by binding CC chemokines especially by APO-RANTES. O-glycosylated, but not N-glycosylated. Ser-6 appears to be the major site even if Ser-7 may be also O-glycosylated. Also sialylated glycans present which contribute to chemokine binding. Thr-16 and Ser-17 may also be glycosylated and, if so, with small moieties such as a T-antigen.

The protein localises to the cell membrane. Its function is as follows. Receptor for a number of inflammatory CC-chemokines including CCL3/MIP-1-alpha, CCL4/MIP-1-beta and RANTES and subsequently transduces a signal by increasing the intracellular calcium ion level. May play a role in the control of granulocytic lineage proliferation or differentiation. Participates in T-lymphocyte migration to the infection site by acting as a chemotactic receptor. This chain is C-C chemokine receptor type 5 (CCR5), found in Theropithecus gelada (Gelada baboon).